The sequence spans 521 residues: Protein NRT1/ PTR FAMILY 5.5 (521 aa).

A run of 12 helical transmembrane segments spans residues 3–23, 35–55, 62–82, 96–116, 134–154, 165–185, 279–299, 310–327, 356–376, 394–414, 440–460, and 478–498; these read VLSWAFTVAWFTLWMLMLYLT, AIVNVFAGVSAIGHLGMQFLV, FWMLCLSTLAFSFGFGFLAIS, FYVALTVISVGIFGRSISLGV, LVSFVIGNVGNFVFLLLAAIA, FTIPSGCEVLAMLIFISGACS, VPLFATSLISGIVFSLGNTFF, FGSWNLPLPLLLLFSEAA, PYGIPVSIILSIFCCSIAAHV, VPMSVFWLLPQYILLGSITGI, VGVCGVGIMSNIALVSLVGSV, and YYWVITVFCMFNLLLYFIVTY.

The protein belongs to the major facilitator superfamily. Proton-dependent oligopeptide transporter (POT/PTR) (TC 2.A.17) family. In terms of tissue distribution, expressed in roots.

The protein localises to the membrane. In Arabidopsis thaliana (Mouse-ear cress), this protein is Protein NRT1/ PTR FAMILY 5.5 (NPF5.5).